We begin with the raw amino-acid sequence, 102 residues long: Large ribosomal subunit protein bL21 (102 aa).

It belongs to the bacterial ribosomal protein bL21 family. In terms of assembly, part of the 50S ribosomal subunit. Contacts protein L20.

Functionally, this protein binds to 23S rRNA in the presence of protein L20. The chain is Large ribosomal subunit protein bL21 from Stenotrophomonas maltophilia (strain K279a).